A 62-amino-acid polypeptide reads, in one-letter code: Short neurotoxin 1 (62 aa).

The segment covering 1–16 (LECHNQQSIQTPTTTG) has biased composition (polar residues). Residues 1-20 (LECHNQQSIQTPTTTGCSGG) form a disordered region. Intrachain disulfides connect cysteine 3–cysteine 24, cysteine 17–cysteine 41, cysteine 43–cysteine 54, and cysteine 55–cysteine 60.

This sequence belongs to the three-finger toxin family. Short-chain subfamily. Type I alpha-neurotoxin sub-subfamily. In terms of tissue distribution, expressed by the venom gland.

Its subcellular location is the secreted. Functionally, binds to muscle nicotinic acetylcholine receptor (nAChR) and inhibit acetylcholine from binding to the receptor, thereby impairing neuromuscular transmission. The protein is Short neurotoxin 1 of Naja kaouthia (Monocled cobra).